The following is a 55-amino-acid chain: UPF0291 protein CA_C2726 (55 aa).

It belongs to the UPF0291 family.

Its subcellular location is the cytoplasm. The protein is UPF0291 protein CA_C2726 of Clostridium acetobutylicum (strain ATCC 824 / DSM 792 / JCM 1419 / IAM 19013 / LMG 5710 / NBRC 13948 / NRRL B-527 / VKM B-1787 / 2291 / W).